We begin with the raw amino-acid sequence, 305 residues long: Undecaprenyl-diphosphatase (305 aa).

A run of 8 helical transmembrane segments spans residues 18–38 (GVTE…PALV), 55–75 (YLAF…VFFW), 103–123 (WLIV…EQLF), 130–150 (PVPA…GEVL), 187–207 (GVLI…RSGI), 225–245 (FSFL…IPEL), 246–266 (FGPL…ASFV), and 284–304 (LTPF…WLAL).

It belongs to the UppP family.

Its subcellular location is the cell membrane. The enzyme catalyses di-trans,octa-cis-undecaprenyl diphosphate + H2O = di-trans,octa-cis-undecaprenyl phosphate + phosphate + H(+). Catalyzes the dephosphorylation of undecaprenyl diphosphate (UPP). Confers resistance to bacitracin. The protein is Undecaprenyl-diphosphatase of Mycolicibacterium paratuberculosis (strain ATCC BAA-968 / K-10) (Mycobacterium paratuberculosis).